The primary structure comprises 434 residues: Trigger factor (434 aa).

The region spanning 160–245 (GDKVKMNFVG…LTEVQAAQLP (86 aa)) is the PPIase FKBP-type domain.

This sequence belongs to the FKBP-type PPIase family. Tig subfamily.

The protein localises to the cytoplasm. The catalysed reaction is [protein]-peptidylproline (omega=180) = [protein]-peptidylproline (omega=0). Its function is as follows. Involved in protein export. Acts as a chaperone by maintaining the newly synthesized protein in an open conformation. Functions as a peptidyl-prolyl cis-trans isomerase. This chain is Trigger factor, found in Shewanella denitrificans (strain OS217 / ATCC BAA-1090 / DSM 15013).